The following is a 906-amino-acid chain: Coatomer subunit beta' (906 aa).

WD repeat units follow at residues alanine 13–threonine 52, valine 55–methionine 94, alanine 97–glutamine 136, glycine 140–threonine 180, glycine 183–threonine 224, glycine 227–threonine 266, serine 350–phenylalanine 388, and serine 390–lysine 425. Lysine 627 carries the post-translational modification N6-acetyllysine. The WD 9 repeat unit spans residues isoleucine 746 to lysine 783. The tract at residues glutamate 837 to proline 862 is disordered. Serine 859 carries the phosphoserine modification. At threonine 861 the chain carries Phosphothreonine. Positions alanine 866 to glutamate 890 form a coiled coil.

It belongs to the WD repeat COPB2 family. In terms of assembly, oligomeric complex that consists of at least the alpha, beta, beta', gamma, delta, epsilon and zeta subunits. Probably interacts with PEX11A. Interacts with SCYL1. Interacts with JAGN1.

The protein localises to the cytoplasm. The protein resides in the cytosol. It localises to the golgi apparatus membrane. It is found in the cytoplasmic vesicle. Its subcellular location is the COPI-coated vesicle membrane. In terms of biological role, the coatomer is a cytosolic protein complex that binds to dilysine motifs and reversibly associates with Golgi non-clathrin-coated vesicles, which further mediate biosynthetic protein transport from the ER, via the Golgi up to the trans Golgi network. Coatomer complex is required for budding from Golgi membranes, and is essential for the retrograde Golgi-to-ER transport of dilysine-tagged proteins. In mammals, the coatomer can only be recruited by membranes associated to ADP-ribosylation factors (ARFs), which are small GTP-binding proteins; the complex also influences the Golgi structural integrity, as well as the processing, activity, and endocytic recycling of LDL receptors. Functionally, this coatomer complex protein, essential for Golgi budding and vesicular trafficking, is a selective binding protein (RACK) for protein kinase C, epsilon type. It binds to Golgi membranes in a GTP-dependent manner. The sequence is that of Coatomer subunit beta' (COPB2) from Macaca fascicularis (Crab-eating macaque).